The sequence spans 176 residues: MRELVAKRYAKALVEALGEDRLASTLEWLKGSESAFGTEAFQEMLASPQISKTLKGQVVLDVLGDGEAKLLNFIKVLADKNRLELIPDVCKELEKSIAATRNEYVAVLTTQEAFDDKTLKAIEETLAKKLQAKLVLSQKREEFEGVKLVVEDLGVEVSFSRERFINDLKNHILKAF.

This sequence belongs to the ATPase delta chain family. F-type ATPases have 2 components, F(1) - the catalytic core - and F(0) - the membrane proton channel. F(1) has five subunits: alpha(3), beta(3), gamma(1), delta(1), epsilon(1). F(0) has three main subunits: a(1), b(2) and c(10-14). The alpha and beta chains form an alternating ring which encloses part of the gamma chain. F(1) is attached to F(0) by a central stalk formed by the gamma and epsilon chains, while a peripheral stalk is formed by the delta and b chains.

Its subcellular location is the cell inner membrane. In terms of biological role, f(1)F(0) ATP synthase produces ATP from ADP in the presence of a proton or sodium gradient. F-type ATPases consist of two structural domains, F(1) containing the extramembraneous catalytic core and F(0) containing the membrane proton channel, linked together by a central stalk and a peripheral stalk. During catalysis, ATP synthesis in the catalytic domain of F(1) is coupled via a rotary mechanism of the central stalk subunits to proton translocation. Functionally, this protein is part of the stalk that links CF(0) to CF(1). It either transmits conformational changes from CF(0) to CF(1) or is implicated in proton conduction. This is ATP synthase subunit delta from Wolinella succinogenes (strain ATCC 29543 / DSM 1740 / CCUG 13145 / JCM 31913 / LMG 7466 / NCTC 11488 / FDC 602W) (Vibrio succinogenes).